We begin with the raw amino-acid sequence, 271 residues long: Formamidopyrimidine-DNA glycosylase (271 aa).

Catalysis depends on P2, which acts as the Schiff-base intermediate with DNA. The active-site Proton donor is the E3. K58 acts as the Proton donor; for beta-elimination activity in catalysis. The DNA site is built by H91, R110, and R152. An FPG-type zinc finger spans residues 237–271 (RVYDRAGQPCRVCGEPIRCVRLGQRATYYCPRCQR). R261 (proton donor; for delta-elimination activity) is an active-site residue.

It belongs to the FPG family. As to quaternary structure, monomer. Requires Zn(2+) as cofactor.

The catalysed reaction is Hydrolysis of DNA containing ring-opened 7-methylguanine residues, releasing 2,6-diamino-4-hydroxy-5-(N-methyl)formamidopyrimidine.. The enzyme catalyses 2'-deoxyribonucleotide-(2'-deoxyribose 5'-phosphate)-2'-deoxyribonucleotide-DNA = a 3'-end 2'-deoxyribonucleotide-(2,3-dehydro-2,3-deoxyribose 5'-phosphate)-DNA + a 5'-end 5'-phospho-2'-deoxyribonucleoside-DNA + H(+). Functionally, involved in base excision repair of DNA damaged by oxidation or by mutagenic agents. Acts as a DNA glycosylase that recognizes and removes damaged bases. Has a preference for oxidized purines, such as 7,8-dihydro-8-oxoguanine (8-oxoG). Has AP (apurinic/apyrimidinic) lyase activity and introduces nicks in the DNA strand. Cleaves the DNA backbone by beta-delta elimination to generate a single-strand break at the site of the removed base with both 3'- and 5'-phosphates. This chain is Formamidopyrimidine-DNA glycosylase, found in Methylococcus capsulatus (strain ATCC 33009 / NCIMB 11132 / Bath).